The chain runs to 92 residues: Islet amyloid polypeptide (92 aa).

The signal sequence occupies residues Met1 to Ala22. Residues Thr23–Gly34 constitute a propeptide that is removed on maturation. Cys38 and Cys43 are disulfide-bonded. Position 73 is a tyrosine amide (Tyr73). The propeptide occupies Asn77–Leu92.

Belongs to the calcitonin family. As to quaternary structure, can form homodimers. Interacts with IDE and INS. Interaction with INS inhibits homodimerization and fibril formation.

The protein localises to the secreted. Amylin/IAPP is a glucoregulatory peptide hormone that plays an important role in the regulation of energy homeostasis. Selectively inhibits insulin-stimulated glucose utilization and glycogen deposition in muscle, while not affecting adipocyte glucose metabolism. IAPP function is mediated by the CALCR-RAMPs (AMYRs) receptor complexes. Amylin can also bind CALCR receptor in the absence of RAMPs, although it is more selective for AMYRs. In Cavia porcellus (Guinea pig), this protein is Islet amyloid polypeptide (IAPP).